The chain runs to 1217 residues: ATP-dependent helicase/nuclease subunit A (1217 aa).

A UvrD-like helicase ATP-binding domain is found at Val10–Arg475. Ala31–Thr38 provides a ligand contact to ATP. Residues Lys476 to Gly786 form the UvrD-like helicase C-terminal domain.

It belongs to the helicase family. AddA subfamily. In terms of assembly, heterodimer of AddA and AddB/RexB. The cofactor is Mg(2+).

It catalyses the reaction Couples ATP hydrolysis with the unwinding of duplex DNA by translocating in the 3'-5' direction.. It carries out the reaction ATP + H2O = ADP + phosphate + H(+). In terms of biological role, the heterodimer acts as both an ATP-dependent DNA helicase and an ATP-dependent, dual-direction single-stranded exonuclease. Recognizes the chi site generating a DNA molecule suitable for the initiation of homologous recombination. The AddA nuclease domain is required for chi fragment generation; this subunit has the helicase and 3' -&gt; 5' nuclease activities. This chain is ATP-dependent helicase/nuclease subunit A, found in Staphylococcus aureus (strain MRSA252).